The primary structure comprises 130 residues: Small ribosomal subunit protein uS9 (130 aa).

The protein belongs to the universal ribosomal protein uS9 family.

The protein is Small ribosomal subunit protein uS9 of Streptococcus uberis (strain ATCC BAA-854 / 0140J).